Reading from the N-terminus, the 667-residue chain is UvrABC system protein B (667 aa).

Residues 31–414 (AGIESGEKEQ…EMDRTKHVVQ (384 aa)) enclose the Helicase ATP-binding domain. Position 44-51 (44-51 (GATGTGKT)) interacts with ATP. Residues 97–120 (YYDYYQPEAYVPSSDTYIEKDSAI) carry the Beta-hairpin motif. Positions 435 to 597 (QIDDLVGEIN…ITPHTIKKAI (163 aa)) constitute a Helicase C-terminal domain. One can recognise a UVR domain in the interval 630 to 665 (LDMISKLEEQMKTAAKKLDFEQAATLRDTVMELKAQ).

This sequence belongs to the UvrB family. In terms of assembly, forms a heterotetramer with UvrA during the search for lesions. Interacts with UvrC in an incision complex.

Its subcellular location is the cytoplasm. Its function is as follows. The UvrABC repair system catalyzes the recognition and processing of DNA lesions. A damage recognition complex composed of 2 UvrA and 2 UvrB subunits scans DNA for abnormalities. Upon binding of the UvrA(2)B(2) complex to a putative damaged site, the DNA wraps around one UvrB monomer. DNA wrap is dependent on ATP binding by UvrB and probably causes local melting of the DNA helix, facilitating insertion of UvrB beta-hairpin between the DNA strands. Then UvrB probes one DNA strand for the presence of a lesion. If a lesion is found the UvrA subunits dissociate and the UvrB-DNA preincision complex is formed. This complex is subsequently bound by UvrC and the second UvrB is released. If no lesion is found, the DNA wraps around the other UvrB subunit that will check the other stand for damage. In Lactiplantibacillus plantarum (strain ATCC BAA-793 / NCIMB 8826 / WCFS1) (Lactobacillus plantarum), this protein is UvrABC system protein B.